Here is an 890-residue protein sequence, read N- to C-terminus: MTDVTIKTLAAERQTSVERLVQQFADAGIRKSADDSVSAQEKQTLIDHLNQKNSGPDKLTLQRKTRSTLNIPGTGGKSKSVQIEVRKKRTFVKRDPQEAERLAAEEQAQREAEEQARREAEESAKREAQQKAEREAAEQAKREAAEQAKREAAEKDKVSNQQDDMTKNAQAEKARREQEAAELKRKAEEEARRKLEEEARRVAEEARRMAEENKWTDNAEPTEDSSDYHVTTSQHARQAEDESDREVEGGRGRGRNAKAARPKKGNKHAESKADREEARAAVRGGKGGKRKGSSLQQGFQKPAQAVNRDVVIGETITVGELANKMAVKGSQVIKAMMKLGAMATINQVIDQETAQLVAEEMGHKVILRRENELEEAVMSDRDTGAAAEPRAPVVTIMGHVDHGKTSLLDYIRSTKVASGEAGGITQHIGAYHVETENGMITFLDTPGHAAFTSMRARGAQATDIVVLVVAADDGVMPQTIEAIQHAKAAQVPVVVAVNKIDKPEADPDRVKNELSQYGILPEEWGGESQFVHVSAKAGTGIDELLDAILLQAEVLELKAVRKGMASGAVIESFLDKGRGPVATVLVREGTLHKGDIVLCGFEYGRVRAMRNELGREVLEAGPSIPVEILGLSGVPAAGDEVTVVRDEKKAREVALYRQGKFREVKLARQQKSKLENMFANMTEGEVHEVNIVLKADVQGSVEAISDSLLKLSTDEVKVKIIGSGVGGITETDATLAAASNAILVGFNVRADASARKVIEAESLDLRYYSVIYNLIDEVKAAMSGMLSPELKQQIIGLAEVRDVFKSPKFGAIAGCMVTEGVVKRHNPIRVLRDNVVIYEGELESLRRFKDDVNEVRNGMECGIGVKNYNDVRTGDVIEVFEIIEIQRTIA.

The interval 45–304 (LIDHLNQKNS…LQQGFQKPAQ (260 aa)) is disordered. Residues 67–81 (STLNIPGTGGKSKSV) show a composition bias toward polar residues. A compositionally biased stretch (basic and acidic residues) spans 92–217 (VKRDPQEAER…RMAEENKWTD (126 aa)). A compositionally biased stretch (basic residues) spans 252–266 (GRGRNAKAARPKKGN). Positions 267–280 (KHAESKADREEARA) are enriched in basic and acidic residues. Residues 389–558 (PRAPVVTIMG…LLQAEVLELK (170 aa)) form the tr-type G domain. A G1 region spans residues 398–405 (GHVDHGKT). 398–405 (GHVDHGKT) is a binding site for GTP. The G2 stretch occupies residues 423-427 (GITQH). A G3 region spans residues 444-447 (DTPG). GTP is bound by residues 444-448 (DTPGH) and 498-501 (NKID). The tract at residues 498–501 (NKID) is G4. The interval 534–536 (SAK) is G5. Lys-808 carries the post-translational modification N6-acetyllysine.

The protein belongs to the TRAFAC class translation factor GTPase superfamily. Classic translation factor GTPase family. IF-2 subfamily.

It is found in the cytoplasm. Functionally, one of the essential components for the initiation of protein synthesis. Protects formylmethionyl-tRNA from spontaneous hydrolysis and promotes its binding to the 30S ribosomal subunits. Also involved in the hydrolysis of GTP during the formation of the 70S ribosomal complex. This chain is Translation initiation factor IF-2, found in Escherichia coli (strain SMS-3-5 / SECEC).